Consider the following 163-residue polypeptide: Anthranilate 1,2-dioxygenase small subunit (163 aa).

This sequence belongs to the bacterial ring-hydroxylating dioxygenase beta subunit family. As to quaternary structure, the anthranilate dioxygenase (AntDO) multicomponent enzyme system is composed of an oxygenase component and a NADH:acceptor reductase component (AntC). The oxygenase component is a heterohexamer of 3 large (AntA) and 3 small (AntB) subunits.

It carries out the reaction anthranilate + NADH + O2 + 3 H(+) = catechol + NH4(+) + CO2 + NAD(+). The enzyme catalyses anthranilate + NADPH + O2 + 3 H(+) = catechol + NH4(+) + CO2 + NADP(+). The protein operates within aromatic compound metabolism; anthranilate degradation via hydroxylation; catechol from anthranilate: step 1/1. Its function is as follows. Component of anthranilate dioxygenase multicomponent enzyme system which catalyzes the incorporation of both atoms of molecular oxygen into anthranilate to form catechol. The protein is Anthranilate 1,2-dioxygenase small subunit of Acinetobacter baylyi (strain ATCC 33305 / BD413 / ADP1).